A 258-amino-acid chain; its full sequence is tRNA pseudouridine synthase A (258 aa).

The active-site Nucleophile is the Asp52. A substrate-binding site is contributed by Tyr110.

It belongs to the tRNA pseudouridine synthase TruA family. As to quaternary structure, homodimer.

The catalysed reaction is uridine(38/39/40) in tRNA = pseudouridine(38/39/40) in tRNA. Functionally, formation of pseudouridine at positions 38, 39 and 40 in the anticodon stem and loop of transfer RNAs. The chain is tRNA pseudouridine synthase A from Francisella tularensis subsp. holarctica (strain FTNF002-00 / FTA).